The primary structure comprises 411 residues: Peptidase T (411 aa).

His-79 lines the Zn(2+) pocket. Asp-81 is a catalytic residue. A Zn(2+)-binding site is contributed by Asp-142. The active-site Proton acceptor is Glu-176. Positions 177, 199, and 381 each coordinate Zn(2+).

This sequence belongs to the peptidase M20B family. Zn(2+) serves as cofactor.

It is found in the cytoplasm. It carries out the reaction Release of the N-terminal residue from a tripeptide.. Functionally, cleaves the N-terminal amino acid of tripeptides. The chain is Peptidase T from Geobacillus kaustophilus (strain HTA426).